The primary structure comprises 72 residues: Bowman-Birk type proteinase inhibitor (72 aa).

Cystine bridges form between C8/C61, C9/C24, C12/C57, C14/C22, C31/C38, C35/C50, and C40/C48.

Belongs to the Bowman-Birk serine protease inhibitor family.

Its function is as follows. This inhibitor has two domains, each with separate antiprotease activity. 1 mole of inhibitor inhibits either 1 mole of trypsin or 2 moles of chymotrypsin, stoichiometrically. This chain is Bowman-Birk type proteinase inhibitor, found in Vicia sativa subsp. nigra (Common vetch).